A 77-amino-acid polypeptide reads, in one-letter code: Conotoxin Cl6.12 (77 aa).

Residues 1–20 (MKFYLLLTAALLLTAVIIEA) form the signal peptide. Residues 21–36 (APTDHQDEARDLMREE) constitute a propeptide that is removed on maturation. Cystine bridges form between C43–C58, C51–C62, and C57–C68.

As to expression, expressed by the venom duct.

The protein localises to the secreted. This chain is Conotoxin Cl6.12, found in Californiconus californicus (California cone).